Here is a 238-residue protein sequence, read N- to C-terminus: Uridylate kinase (238 aa).

12-15 is an ATP binding site; the sequence is KLSG. Glycine 54 is a binding site for UMP. ATP contacts are provided by glycine 55 and arginine 59. UMP-binding positions include aspartate 74 and 135–142; that span reads TGNPFFTT. 3 residues coordinate ATP: threonine 162, tyrosine 168, and aspartate 171.

It belongs to the UMP kinase family. Homohexamer.

It is found in the cytoplasm. The enzyme catalyses UMP + ATP = UDP + ADP. Its pathway is pyrimidine metabolism; CTP biosynthesis via de novo pathway; UDP from UMP (UMPK route): step 1/1. With respect to regulation, inhibited by UTP. In terms of biological role, catalyzes the reversible phosphorylation of UMP to UDP. In Azoarcus sp. (strain BH72), this protein is Uridylate kinase.